The chain runs to 949 residues: Leucine--tRNA ligase (949 aa).

The short motif at 68-79 (PYPSGEGLHVGH) is the 'HIGH' region element. The interval 540–562 (VPDYSPVSFDPDDAGSEPSPPLG) is disordered. Positions 722–726 (KIGKS) match the 'KMSKS' region motif. Lys725 serves as a coordination point for ATP.

Belongs to the class-I aminoacyl-tRNA synthetase family.

It localises to the cytoplasm. The enzyme catalyses tRNA(Leu) + L-leucine + ATP = L-leucyl-tRNA(Leu) + AMP + diphosphate. This is Leucine--tRNA ligase from Mycolicibacterium gilvum (strain PYR-GCK) (Mycobacterium gilvum (strain PYR-GCK)).